Consider the following 415-residue polypeptide: Casein kinase I isoform delta (415 aa).

Positions tyrosine 9 to phenylalanine 277 constitute a Protein kinase domain. Residues isoleucine 15–isoleucine 23 and lysine 38 contribute to the ATP site. Aspartate 128 (proton acceptor) is an active-site residue. The tract at residues histidine 278–glutamate 364 is centrosomal localization signal (CLS). Over residues alanine 301 to leucine 315 the composition is skewed to basic and acidic residues. The disordered stretch occupies residues alanine 301–arginine 415. The segment at histidine 317–proline 342 is autoinhibitory. A phosphoserine mark is found at serine 328 and serine 331. Polar residues predominate over residues threonine 347–arginine 358. Phosphoserine is present on serine 370. Arginine 375 bears the Omega-N-methylarginine mark. The span at asparagine 380–isoleucine 400 shows a compositional bias: polar residues. 5 positions are modified to phosphoserine: serine 382, serine 383, serine 384, serine 407, and serine 411.

The protein belongs to the protein kinase superfamily. CK1 Ser/Thr protein kinase family. Casein kinase I subfamily. As to quaternary structure, monomer. Component of the circadian core oscillator, which includes the CRY proteins, CLOCK, or NPAS2, ARTNL/BMAL1 or ARTNL2/BMAL2, CSNK1D and/or CSNK1E, TIMELESS and the PER proteins. Interacts with DNMT1 and MAP1A. Interacts directly with PER1 and PER2 which may lead to their degradation. Interacts with MAPT/TAU, SNAPIN, DBNDD2, AIB1/NCOA3 and ESR1. Interacts with AKAP9/AKAP450; this interaction promotes centrosomal subcellular location. Binds to tubulins in mitotic cells upon DNA damage. Interacts with GJA1. Interacts with DDX3X; this interaction enhances CSNK1D kinase activity in vitro, but it is unclear whether this interaction is physiologically relevant. Interacts with FAM83A, FAM83B, FAM83E and FAM83H (via DUF1669). Post-translationally, autophosphorylated on serine and threonine residues; this autophosphorylation represses activity. Reactivated by phosphatase-mediated dephosphorylation. May be dephosphorylated by PP1.

Its subcellular location is the cytoplasm. It localises to the nucleus. The protein resides in the cytoskeleton. It is found in the microtubule organizing center. The protein localises to the centrosome. Its subcellular location is the perinuclear region. It localises to the cell membrane. The protein resides in the spindle. It is found in the golgi apparatus. The catalysed reaction is L-seryl-[protein] + ATP = O-phospho-L-seryl-[protein] + ADP + H(+). It carries out the reaction L-threonyl-[protein] + ATP = O-phospho-L-threonyl-[protein] + ADP + H(+). The enzyme catalyses L-seryl-[tau protein] + ATP = O-phospho-L-seryl-[tau protein] + ADP + H(+). It catalyses the reaction L-threonyl-[tau protein] + ATP = O-phospho-L-threonyl-[tau protein] + ADP + H(+). Its activity is regulated as follows. Exhibits substrate-dependent heparin activation. Drug-mediated inhibition leads to a delay of the oscillations with the magnitude of this effect dependent upon the timing of drug administration. Inhibited by phosphorylation. Its function is as follows. Essential serine/threonine-protein kinase that regulates diverse cellular growth and survival processes including Wnt signaling, DNA repair and circadian rhythms. It can phosphorylate a large number of proteins. Casein kinases are operationally defined by their preferential utilization of acidic proteins such as caseins as substrates. Phosphorylates connexin-43/GJA1, MAP1A, SNAPIN, MAPT/TAU, TOP2A, DCK, HIF1A, EIF6, p53/TP53, DVL2, DVL3, ESR1, AIB1/NCOA3, DNMT1, PKD2, YAP1, PER1 and PER2. Central component of the circadian clock. In balance with PP1, determines the circadian period length through the regulation of the speed and rhythmicity of PER1 and PER2 phosphorylation. Controls PER1 and PER2 nuclear transport and degradation. YAP1 phosphorylation promotes its SCF(beta-TRCP) E3 ubiquitin ligase-mediated ubiquitination and subsequent degradation. DNMT1 phosphorylation reduces its DNA-binding activity. Phosphorylation of ESR1 and AIB1/NCOA3 stimulates their activity and coactivation. Phosphorylation of DVL2 and DVL3 regulates WNT3A signaling pathway that controls neurite outgrowth. Phosphorylates NEDD9/HEF1. EIF6 phosphorylation promotes its nuclear export. Triggers down-regulation of dopamine receptors in the forebrain. Activates DCK in vitro by phosphorylation. TOP2A phosphorylation favors DNA cleavable complex formation. May regulate the formation of the mitotic spindle apparatus in extravillous trophoblast. Modulates connexin-43/GJA1 gap junction assembly by phosphorylation. Probably involved in lymphocyte physiology. Regulates fast synaptic transmission mediated by glutamate. This is Casein kinase I isoform delta (CSNK1D) from Pongo abelii (Sumatran orangutan).